A 60-amino-acid chain; its full sequence is Large ribosomal subunit protein uL30 (60 aa).

Belongs to the universal ribosomal protein uL30 family. As to quaternary structure, part of the 50S ribosomal subunit.

This is Large ribosomal subunit protein uL30 from Streptococcus mutans serotype c (strain ATCC 700610 / UA159).